A 676-amino-acid chain; its full sequence is Hypermethylated in cancer 1 protein (676 aa).

Residues 1 to 27 form a disordered region; the sequence is APGARPAASRERGHKSREERCGERGAA. Positions 8–23 are enriched in basic and acidic residues; that stretch reads ASRERGHKSREERCGE. Residues 63-126 enclose the BTB domain; the sequence is CDVIIVVQNA…IYTGRLGECE (64 aa). Positions 241–245 are binding to CtBP; the sequence is GLDLS. Disordered stretches follow at residues 264–326 and 342–405; these read PAEP…LPRG and GPYL…DRYC. 2 stretches are compositionally biased toward basic and acidic residues: residues 266–278 and 351–361; these read EPRE…RHDS and EKELEREEKAE. Residues 384–398 are compositionally biased toward low complexity; the sequence is STSEETGSSEGPSPG. C2H2-type zinc fingers lie at residues 420–447, 474–501, 502–529, 530–557, and 558–585; these read YVCI…EEEL, YRCS…LTRP, YPCT…GLKP, FACD…GEKP, and YECQ…AGPD.

Belongs to the krueppel C2H2-type zinc-finger protein family. Hic subfamily. Interacts with CtBP. In terms of tissue distribution, isoform 1 is highly expressed in kidney and lung. Expression of isoform 2 is higher in the lens, retina and stomach, and extremely low in heart, muscle, kidney and lung. Isoform 3 is weakly expressed in heart, kidney and lens.

Its subcellular location is the nucleus. In terms of biological role, binds specifically to the gamma F-1-binding motif of the gamma F-crystallin promoter. May have a regulatory role in sclerotome specification and/or differentiation. Isoform 2 functions as a transcriptional repressor in lens cells. In Gallus gallus (Chicken), this protein is Hypermethylated in cancer 1 protein (HIC1).